Consider the following 344-residue polypeptide: Uroporphyrinogen decarboxylase (344 aa).

Residues 27 to 31 (RQAGR), F46, D76, Y151, S206, and H319 each bind substrate.

This sequence belongs to the uroporphyrinogen decarboxylase family. Homodimer.

Its subcellular location is the cytoplasm. It catalyses the reaction uroporphyrinogen III + 4 H(+) = coproporphyrinogen III + 4 CO2. It participates in porphyrin-containing compound metabolism; protoporphyrin-IX biosynthesis; coproporphyrinogen-III from 5-aminolevulinate: step 4/4. Its function is as follows. Catalyzes the decarboxylation of four acetate groups of uroporphyrinogen-III to yield coproporphyrinogen-III. The polypeptide is Uroporphyrinogen decarboxylase (Halalkalibacterium halodurans (strain ATCC BAA-125 / DSM 18197 / FERM 7344 / JCM 9153 / C-125) (Bacillus halodurans)).